Here is a 149-residue protein sequence, read N- to C-terminus: Transcription factor MafF (149 aa).

Positions 51–76 (RLKQRRRTLKNRGYAASCRVKRVCQK) are basic motif. Residues 51-114 (RLKQRRRTLK…DTLRGKYEAL (64 aa)) form the bZIP domain. The leucine-zipper stretch occupies residues 79 to 93 (LQKQKMELEWEVDKL).

It belongs to the bZIP family. Maf subfamily. In terms of assembly, monomer and homo- or heterodimer. Highly expressed in the ovary, lower expression in the brain, heart and mesenterium.

The protein localises to the nucleus. Functionally, since it lacks a putative transactivation domain, it may behave as a transcriptional repressor when it dimerizes among itself. May also serve as a transcriptional activator by dimerizing with other (usually larger) basic-zipper proteins and recruiting them to specific DNA-binding sites. May be involved in the cellular stress response. This Gallus gallus (Chicken) protein is Transcription factor MafF (MAFF).